A 399-amino-acid polypeptide reads, in one-letter code: 26S proteasome regulatory subunit S10B homolog B (399 aa).

Position 180–187 (180–187) interacts with ATP; that stretch reads GPPGTGKT. Lysine 203 is covalently cross-linked (Glycyl lysine isopeptide (Lys-Gly) (interchain with G-Cter in ubiquitin)).

Belongs to the AAA ATPase family. In terms of assembly, component of the 19S regulatory particle (RP/PA700) base subcomplex of the 26S proteasome. The 26S proteasome is composed of a core protease (CP), known as the 20S proteasome, capped at one or both ends by the 19S regulatory particle (RP/PA700). The RP/PA700 complex is composed of at least 17 different subunits in two subcomplexes, the base and the lid, which form the portions proximal and distal to the 20S proteolytic core, respectively.

Its subcellular location is the cytoplasm. It is found in the nucleus. In terms of biological role, the 26S proteasome is involved in the ATP-dependent degradation of ubiquitinated proteins. The regulatory (or ATPase) complex confers ATP dependency and substrate specificity to the 26S complex. The protein is 26S proteasome regulatory subunit S10B homolog B (RPT4B) of Arabidopsis thaliana (Mouse-ear cress).